A 500-amino-acid polypeptide reads, in one-letter code: Beta-glucosidase 2 (500 aa).

The N-terminal stretch at 1–24 (MGAAAAAGFFFVLLFLSVQGGAVG) is a signal peptide. Glutamine 44 and histidine 144 together coordinate a beta-D-glucoside. Glutamate 190 serves as the catalytic Proton donor. Cysteine 209 and cysteine 218 are oxidised to a cystine. A glycan (N-linked (GlcNAc...) asparagine) is linked at asparagine 222. Residues tyrosine 334 and glutamate 403 each contribute to the a beta-D-glucoside site. Catalysis depends on glutamate 403, which acts as the Nucleophile. An N-linked (GlcNAc...) asparagine glycan is attached at asparagine 410. Tryptophan 445 is a binding site for a beta-D-glucoside.

This sequence belongs to the glycosyl hydrolase 1 family.

It carries out the reaction Hydrolysis of terminal, non-reducing beta-D-glucosyl residues with release of beta-D-glucose.. The polypeptide is Beta-glucosidase 2 (BGLU2) (Oryza sativa subsp. japonica (Rice)).